The chain runs to 212 residues: MGTEFNGLFDEWAHTYDSFVQGEDIQYKEVFAHYEDILEDVVNKSFGNVLEFGVGTGNLTNKLLLAGRTVYGIEPSREMRMIAKEKLPKEFSITEGDFLSFEVPNSIDTIVSTYAFHHLTDDEKNVAIAKYSQLLNKGGKIVFADTIFADQDAYDKTVEAAKQRGFHQLANDLQTEYYTRIPVMQTIFENNGFHVTFTRLNHFVWVMEATKQ.

The S-adenosyl-L-methionine site is built by G53, E74, and D97.

The protein belongs to the methyltransferase superfamily. YrrT family.

Functionally, could be a S-adenosyl-L-methionine-dependent methyltransferase. This is an uncharacterized protein from Bacillus cereus (strain 03BB102).